Here is a 457-residue protein sequence, read N- to C-terminus: uncharacterized protein (457 aa).

The next 14 membrane-spanning stretches (helical) occupy residues 15-35 (YGAI…GAIA), 54-74 (IWVV…FSFL), 87-107 (GLVV…LQML), 112-132 (VIQG…IRLI), 144-164 (INSF…AAIL), 166-186 (IASW…ALLL), 205-225 (LPSA…LSGF), 229-249 (QSLT…IFFI), 269-289 (LFSL…LAMV), 308-328 (LLLT…GYLI), 334-354 (GLLG…LVLL), 357-377 (SPAD…FGLF), 400-420 (MLGT…ALML), and 428-448 (THVS…VSGL).

It belongs to the major facilitator superfamily. TCR/Tet family.

It is found in the cell inner membrane. This is an uncharacterized protein from Escherichia coli (strain K12).